Here is a 179-residue protein sequence, read N- to C-terminus: Replication restart protein DnaT (179 aa).

The tract at residues 156-179 (GGLPKRDVNTVSEPDSQIPPGFRG) is disordered.

Belongs to the DnaT family. As to quaternary structure, homooligomerizes. Interacts with PriB. Component of the replication restart primosome. Primosome assembly occurs via a 'hand-off' mechanism. PriA binds to replication forks, subsequently PriB then DnaT bind; DnaT then displaces ssDNA to generate the helicase loading substrate.

In terms of biological role, involved in the restart of stalled replication forks, which reloads the replicative helicase on sites other than the origin of replication. Can function in multiple replication restart pathways. Displaces ssDNA from a PriB-ssDNA complex. Probably forms a spiral filament on ssDNA. This is Replication restart protein DnaT from Escherichia coli O1:K1 / APEC.